A 152-amino-acid polypeptide reads, in one-letter code: Phosphopantetheine adenylyltransferase (152 aa).

Ser-9 is a substrate binding site. ATP is bound by residues 9–10 (SF) and His-17. Substrate is bound by residues Lys-41, Thr-73, and Arg-87. ATP-binding positions include 88-90 (GLR), Glu-98, and 122-128 (TSFISSS).

Belongs to the bacterial CoaD family. Homohexamer. Requires Mg(2+) as cofactor.

It localises to the cytoplasm. The catalysed reaction is (R)-4'-phosphopantetheine + ATP + H(+) = 3'-dephospho-CoA + diphosphate. It functions in the pathway cofactor biosynthesis; coenzyme A biosynthesis; CoA from (R)-pantothenate: step 4/5. In terms of biological role, reversibly transfers an adenylyl group from ATP to 4'-phosphopantetheine, yielding dephospho-CoA (dPCoA) and pyrophosphate. This Flavobacterium johnsoniae (strain ATCC 17061 / DSM 2064 / JCM 8514 / BCRC 14874 / CCUG 350202 / NBRC 14942 / NCIMB 11054 / UW101) (Cytophaga johnsonae) protein is Phosphopantetheine adenylyltransferase.